We begin with the raw amino-acid sequence, 272 residues long: Bis(5'-nucleosyl)-tetraphosphatase, symmetrical (272 aa).

This sequence belongs to the Ap4A hydrolase family.

It catalyses the reaction P(1),P(4)-bis(5'-adenosyl) tetraphosphate + H2O = 2 ADP + 2 H(+). In terms of biological role, hydrolyzes diadenosine 5',5'''-P1,P4-tetraphosphate to yield ADP. In Shewanella frigidimarina (strain NCIMB 400), this protein is Bis(5'-nucleosyl)-tetraphosphatase, symmetrical.